A 181-amino-acid polypeptide reads, in one-letter code: MSGLTIFSDSDASQPIWQSQDADAIQKQLNDIGVRFERWEASQKLSDAPSSEEVLAVYQHEIDKLVAEKGYQSWDVISMRSDNPQCAELRTKFLSEHIHHEDEVRFFVEGAGLFCLHLNGKIYQILCEKNDLLSVPAGTAHWFDMGPEPHFTAIRLFDNPEGWIAHFTGDKIADVYPKLEC.

Fe(2+) is bound by residues H97, H99, E103, and H141. Ni(2+)-binding residues include H97, H99, E103, and H141.

This sequence belongs to the acireductone dioxygenase (ARD) family. As to quaternary structure, monomer. It depends on Fe(2+) as a cofactor. The cofactor is Ni(2+).

It catalyses the reaction 1,2-dihydroxy-5-(methylsulfanyl)pent-1-en-3-one + O2 = 3-(methylsulfanyl)propanoate + CO + formate + 2 H(+). The enzyme catalyses 1,2-dihydroxy-5-(methylsulfanyl)pent-1-en-3-one + O2 = 4-methylsulfanyl-2-oxobutanoate + formate + 2 H(+). It functions in the pathway amino-acid biosynthesis; L-methionine biosynthesis via salvage pathway; L-methionine from S-methyl-5-thio-alpha-D-ribose 1-phosphate: step 5/6. Functionally, catalyzes 2 different reactions between oxygen and the acireductone 1,2-dihydroxy-3-keto-5-methylthiopentene (DHK-MTPene) depending upon the metal bound in the active site. Fe-containing acireductone dioxygenase (Fe-ARD) produces formate and 2-keto-4-methylthiobutyrate (KMTB), the alpha-ketoacid precursor of methionine in the methionine recycle pathway. Ni-containing acireductone dioxygenase (Ni-ARD) produces methylthiopropionate, carbon monoxide and formate, and does not lie on the methionine recycle pathway. The polypeptide is Acireductone dioxygenase 2 (Pectobacterium atrosepticum (strain SCRI 1043 / ATCC BAA-672) (Erwinia carotovora subsp. atroseptica)).